We begin with the raw amino-acid sequence, 1188 residues long: DNA-directed RNA polymerase subunit beta (1188 aa).

This sequence belongs to the RNA polymerase beta chain family. In terms of assembly, the RNAP catalytic core consists of 2 alpha, 1 beta, 1 beta' and 1 omega subunit. When a sigma factor is associated with the core the holoenzyme is formed, which can initiate transcription.

It carries out the reaction RNA(n) + a ribonucleoside 5'-triphosphate = RNA(n+1) + diphosphate. Functionally, DNA-dependent RNA polymerase catalyzes the transcription of DNA into RNA using the four ribonucleoside triphosphates as substrates. This is DNA-directed RNA polymerase subunit beta from Streptococcus pyogenes serotype M18 (strain MGAS8232).